Consider the following 323-residue polypeptide: UPF0612 protein C569.01c (323 aa).

Coiled coils occupy residues 27-63 (IKRY…MKYE) and 131-225 (NEMN…DARS).

Belongs to the UPF0612 family.

The polypeptide is UPF0612 protein C569.01c (Schizosaccharomyces pombe (strain 972 / ATCC 24843) (Fission yeast)).